The primary structure comprises 77 residues: Protein RALF-like 17 (77 aa).

An N-terminal signal peptide occupies residues 1 to 29 (MAASREFIICCFLTLLLCNFFMRVESGAA). Cysteines 37 and 51 form a disulfide.

This sequence belongs to the plant rapid alkalinization factor (RALF) family.

The protein localises to the secreted. Cell signaling peptide that may regulate plant stress, growth, and development. Mediates a rapid alkalinization of extracellular space by mediating a transient increase in the cytoplasmic Ca(2+) concentration leading to a calcium-dependent signaling events through a cell surface receptor and a concomitant activation of some intracellular mitogen-activated protein kinases. The chain is Protein RALF-like 17 (RALFL17) from Arabidopsis thaliana (Mouse-ear cress).